The sequence spans 200 residues: ATP-dependent Clp protease proteolytic subunit (200 aa).

Serine 96 serves as the catalytic Nucleophile. Histidine 121 is an active-site residue.

This sequence belongs to the peptidase S14 family. In terms of assembly, fourteen ClpP subunits assemble into 2 heptameric rings which stack back to back to give a disk-like structure with a central cavity, resembling the structure of eukaryotic proteasomes.

It is found in the cytoplasm. It carries out the reaction Hydrolysis of proteins to small peptides in the presence of ATP and magnesium. alpha-casein is the usual test substrate. In the absence of ATP, only oligopeptides shorter than five residues are hydrolyzed (such as succinyl-Leu-Tyr-|-NHMec, and Leu-Tyr-Leu-|-Tyr-Trp, in which cleavage of the -Tyr-|-Leu- and -Tyr-|-Trp bonds also occurs).. In terms of biological role, cleaves peptides in various proteins in a process that requires ATP hydrolysis. Has a chymotrypsin-like activity. Plays a major role in the degradation of misfolded proteins. The sequence is that of ATP-dependent Clp protease proteolytic subunit from Leuconostoc citreum (strain KM20).